We begin with the raw amino-acid sequence, 143 residues long: Large ribosomal subunit protein uL11 (143 aa).

Belongs to the universal ribosomal protein uL11 family. As to quaternary structure, part of the ribosomal stalk of the 50S ribosomal subunit. Interacts with L10 and the large rRNA to form the base of the stalk. L10 forms an elongated spine to which L12 dimers bind in a sequential fashion forming a multimeric L10(L12)X complex. One or more lysine residues are methylated.

In terms of biological role, forms part of the ribosomal stalk which helps the ribosome interact with GTP-bound translation factors. The chain is Large ribosomal subunit protein uL11 from Verminephrobacter eiseniae (strain EF01-2).